A 428-amino-acid chain; its full sequence is Maltoporin (428 aa).

A signal peptide spans methionine 1–alanine 24.

Belongs to the porin LamB (TC 1.B.3) family. In terms of assembly, homotrimer formed of three 18-stranded antiparallel beta-barrels, containing three independent channels.

It is found in the cell outer membrane. It catalyses the reaction beta-maltose(in) = beta-maltose(out). Functionally, involved in the transport of maltose and maltodextrins. The polypeptide is Maltoporin (Photorhabdus laumondii subsp. laumondii (strain DSM 15139 / CIP 105565 / TT01) (Photorhabdus luminescens subsp. laumondii)).